The primary structure comprises 208 residues: MMDIFNSVSESINILNNSVAPMDHREEHEGAPSDKPWGVNFSGHDFLVNSTSRSDIITSVEQVDRTGSCPICASKNDQGTSLAEAMESMVATRQLDSAMSFLSMVRPDLANWDVINYHFSHGIKDPIEKLEYQIDTMIDVHYRAGMAIGRDFAMMVTANGSQFVSPNEKNIKCLSSLTTGLTKLIQVRGDIRKMTTSKKNKRGTAAPL.

This is an uncharacterized protein from Ictalurid herpesvirus 1 (strain Auburn) (IcHV-1).